Consider the following 293-residue polypeptide: ATP phosphoribosyltransferase (293 aa).

It belongs to the ATP phosphoribosyltransferase family. Long subfamily. Mg(2+) serves as cofactor.

The protein resides in the cytoplasm. The catalysed reaction is 1-(5-phospho-beta-D-ribosyl)-ATP + diphosphate = 5-phospho-alpha-D-ribose 1-diphosphate + ATP. It participates in amino-acid biosynthesis; L-histidine biosynthesis; L-histidine from 5-phospho-alpha-D-ribose 1-diphosphate: step 1/9. With respect to regulation, feedback inhibited by histidine. Functionally, catalyzes the condensation of ATP and 5-phosphoribose 1-diphosphate to form N'-(5'-phosphoribosyl)-ATP (PR-ATP). Has a crucial role in the pathway because the rate of histidine biosynthesis seems to be controlled primarily by regulation of HisG enzymatic activity. The protein is ATP phosphoribosyltransferase of Nitratidesulfovibrio vulgaris (strain DP4) (Desulfovibrio vulgaris).